The sequence spans 243 residues: Probable transcriptional regulatory protein LCABL_11860 (243 aa).

Positions 1–23 (MSGHSKWHNIQGRKNAQDSKRGK) are disordered.

This sequence belongs to the TACO1 family.

It is found in the cytoplasm. The protein is Probable transcriptional regulatory protein LCABL_11860 of Lacticaseibacillus casei (strain BL23) (Lactobacillus casei).